Consider the following 323-residue polypeptide: tRNA U34 carboxymethyltransferase (323 aa).

Carboxy-S-adenosyl-L-methionine is bound by residues lysine 91, tryptophan 105, lysine 110, glycine 130, aspartate 152–threonine 154, isoleucine 181–glutamate 182, methionine 196, tyrosine 200, and arginine 315.

The protein belongs to the class I-like SAM-binding methyltransferase superfamily. CmoB family. In terms of assembly, homotetramer.

The catalysed reaction is carboxy-S-adenosyl-L-methionine + 5-hydroxyuridine(34) in tRNA = 5-carboxymethoxyuridine(34) in tRNA + S-adenosyl-L-homocysteine + H(+). Its function is as follows. Catalyzes carboxymethyl transfer from carboxy-S-adenosyl-L-methionine (Cx-SAM) to 5-hydroxyuridine (ho5U) to form 5-carboxymethoxyuridine (cmo5U) at position 34 in tRNAs. This is tRNA U34 carboxymethyltransferase from Escherichia coli O8 (strain IAI1).